The following is a 783-amino-acid chain: Mitochondrial intermediate peptidase (783 aa).

The transit peptide at 1–33 (MKAGIPLSRCTQRIPLLVARQVSRNITTTTTKF) directs the protein to the mitochondrion. H565 serves as a coordination point for Zn(2+). E566 is an active-site residue. H569 and H572 together coordinate Zn(2+).

This sequence belongs to the peptidase M3 family. Zn(2+) serves as cofactor.

It localises to the mitochondrion matrix. The enzyme catalyses Release of an N-terminal octapeptide as second stage of processing of some proteins imported into the mitochondrion.. Its function is as follows. Cleaves proteins, imported into the mitochondrion, to their mature size. While most mitochondrial precursor proteins are processed to the mature form in one step by mitochondrial processing peptidase (MPP), the sequential cleavage by MIP of an octapeptide after initial processing by MPP is a required step for a subgroup of nuclear-encoded precursor proteins destined for the matrix or the inner membrane. The chain is Mitochondrial intermediate peptidase (OCT1) from Candida albicans (strain SC5314 / ATCC MYA-2876) (Yeast).